Here is a 425-residue protein sequence, read N- to C-terminus: tRNA(Ile)-lysidine synthase (425 aa).

ATP is bound at residue 27–32; sequence SGGLDS.

It belongs to the tRNA(Ile)-lysidine synthase family.

The protein localises to the cytoplasm. The enzyme catalyses cytidine(34) in tRNA(Ile2) + L-lysine + ATP = lysidine(34) in tRNA(Ile2) + AMP + diphosphate + H(+). Its function is as follows. Ligates lysine onto the cytidine present at position 34 of the AUA codon-specific tRNA(Ile) that contains the anticodon CAU, in an ATP-dependent manner. Cytidine is converted to lysidine, thus changing the amino acid specificity of the tRNA from methionine to isoleucine. In Streptococcus pneumoniae serotype 2 (strain D39 / NCTC 7466), this protein is tRNA(Ile)-lysidine synthase.